The following is a 296-amino-acid chain: GTPase Era (296 aa).

Positions 3–170 (KSGFITIVGR…LELMVKYLPE (168 aa)) constitute an Era-type G domain. Residues 11–18 (GRPNVGKS) are G1. 11 to 18 (GRPNVGKS) serves as a coordination point for GTP. The G2 stretch occupies residues 37 to 41 (QTTRN). The G3 stretch occupies residues 58–61 (DTPG). GTP-binding positions include 58 to 62 (DTPGI) and 120 to 123 (NKVD). Residues 120–123 (NKVD) form a G4 region. Positions 149–151 (ISA) are G5. The 78-residue stretch at 201–278 (LSQEVPHGIA…NIKIWVKVRK (78 aa)) folds into the KH type-2 domain.

The protein belongs to the TRAFAC class TrmE-Era-EngA-EngB-Septin-like GTPase superfamily. Era GTPase family. Monomer.

The protein resides in the cytoplasm. Its subcellular location is the cell membrane. Functionally, an essential GTPase that binds both GDP and GTP, with rapid nucleotide exchange. Plays a role in 16S rRNA processing and 30S ribosomal subunit biogenesis and possibly also in cell cycle regulation and energy metabolism. The sequence is that of GTPase Era from Clostridium perfringens (strain 13 / Type A).